The following is a 265-amino-acid chain: Acetylglutamate kinase (265 aa).

Substrate is bound by residues 41–42, R63, and N156; that span reads GG.

It belongs to the acetylglutamate kinase family. ArgB subfamily.

Its subcellular location is the cytoplasm. The catalysed reaction is N-acetyl-L-glutamate + ATP = N-acetyl-L-glutamyl 5-phosphate + ADP. It participates in amino-acid biosynthesis; L-arginine biosynthesis; N(2)-acetyl-L-ornithine from L-glutamate: step 2/4. Catalyzes the ATP-dependent phosphorylation of N-acetyl-L-glutamate. This Oceanobacillus iheyensis (strain DSM 14371 / CIP 107618 / JCM 11309 / KCTC 3954 / HTE831) protein is Acetylglutamate kinase.